Reading from the N-terminus, the 189-residue chain is DnaJ homolog subfamily C member 5G (189 aa).

Positions 17 to 98 (SLYAVLDLKK…KKRKIYDQHG (82 aa)) constitute a J domain. The tract at residues 154 to 189 (PEQDSGRKYQQNVQSQPPRSGAKCDFRSEENSEDDF) is disordered. The span at 161–171 (KYQQNVQSQPP) shows a compositional bias: polar residues.

Palmitoylated. As to expression, testis specific.

It localises to the membrane. The chain is DnaJ homolog subfamily C member 5G (DNAJC5G) from Homo sapiens (Human).